We begin with the raw amino-acid sequence, 212 residues long: Uridine kinase (212 aa).

13 to 20 (GGSGSGKT) is a binding site for ATP.

Belongs to the uridine kinase family.

The protein resides in the cytoplasm. The enzyme catalyses uridine + ATP = UMP + ADP + H(+). It catalyses the reaction cytidine + ATP = CMP + ADP + H(+). It functions in the pathway pyrimidine metabolism; CTP biosynthesis via salvage pathway; CTP from cytidine: step 1/3. The protein operates within pyrimidine metabolism; UMP biosynthesis via salvage pathway; UMP from uridine: step 1/1. The chain is Uridine kinase from Bacillus thuringiensis (strain Al Hakam).